A 110-amino-acid chain; its full sequence is Serum amyloid A protein (110 aa).

The disordered stretch occupies residues 73 to 110; it reads GGSGRGAEDSRADQAANEWGRSGKDPNHFRPHGLPDKY. Residues 93–110 are compositionally biased toward basic and acidic residues; sequence RSGKDPNHFRPHGLPDKY.

It belongs to the SAA family. In terms of processing, this protein is the precursor of amyloid protein A, which is formed by the removal of residues from the C-terminal end. In terms of tissue distribution, expressed by the liver; secreted in plasma.

Functionally, major acute phase reactant. Apolipoprotein of the HDL complex. The polypeptide is Serum amyloid A protein (SAA1) (Equus caballus (Horse)).